The sequence spans 1064 residues: Fibropellin-1 (1064 aa).

Residues 1 to 19 form the signal peptide; that stretch reads MRTWLLAVLLLSVIAVTYG. The region spanning 20–55 is the EGF-like 1 domain; it reads QGECDSDPCENGSTCQEGEGSYICQCPMGYDGQNCD. Cystine bridges form between Cys-23-Cys-34, Cys-28-Cys-43, Cys-45-Cys-54, and Cys-62-Cys-88. The N-linked (GlcNAc...) asparagine glycan is linked to Asn-30. Positions 62–175 constitute a CUB domain; the sequence is CGYNVFDANG…NRGFRITFSS (114 aa). A glycan (N-linked (GlcNAc...) asparagine) is linked at Asn-136. Residues 176–212 enclose the EGF-like 2; calcium-binding domain; it reads DGDDCDPNLCQNGAACTDLVNDYACTCPPGFTGRNCE. 61 disulfides stabilise this stretch: Cys-180–Cys-191, Cys-185–Cys-200, Cys-202–Cys-211, Cys-218–Cys-229, Cys-223–Cys-238, Cys-240–Cys-249, Cys-256–Cys-267, Cys-261–Cys-276, Cys-278–Cys-287, Cys-294–Cys-305, Cys-299–Cys-314, Cys-316–Cys-325, Cys-332–Cys-343, Cys-337–Cys-352, Cys-354–Cys-363, Cys-370–Cys-381, Cys-375–Cys-390, Cys-392–Cys-401, Cys-408–Cys-419, Cys-413–Cys-428, Cys-430–Cys-439, Cys-446–Cys-457, Cys-451–Cys-466, Cys-468–Cys-477, Cys-484–Cys-495, Cys-489–Cys-504, Cys-506–Cys-515, Cys-522–Cys-533, Cys-527–Cys-542, Cys-544–Cys-553, Cys-560–Cys-571, Cys-565–Cys-580, Cys-582–Cys-591, Cys-598–Cys-609, Cys-603–Cys-618, Cys-620–Cys-629, Cys-636–Cys-647, Cys-641–Cys-656, Cys-658–Cys-667, Cys-674–Cys-685, Cys-679–Cys-694, Cys-696–Cys-705, Cys-712–Cys-723, Cys-717–Cys-732, Cys-734–Cys-743, Cys-750–Cys-761, Cys-755–Cys-770, Cys-772–Cys-781, Cys-788–Cys-799, Cys-793–Cys-808, Cys-810–Cys-819, Cys-826–Cys-837, Cys-831–Cys-846, Cys-848–Cys-857, Cys-864–Cys-875, Cys-869–Cys-884, Cys-886–Cys-895, Cys-902–Cys-913, Cys-907–Cys-922, Cys-924–Cys-933, and Cys-939–Cys-1015. Residues 214–250 enclose the EGF-like 3; calcium-binding domain; the sequence is DIDECASDPCQNGGACVDGVNGYVCNCVPGFDGDECE. One can recognise an EGF-like 4; calcium-binding domain in the interval 252–288; it reads NINECASSPCLNGGICVDGVNMFECTCLAGFTGVRCE. The EGF-like 5; calcium-binding domain maps to 290–326; it reads NIDECASAPCQNGGICIDGINGYTCSCPLGFSGDNCE. The EGF-like 6; calcium-binding domain occupies 328-364; sequence NDDECSSIPCLNGGTCVDLVNAYMCVCAPGWTGPTCA. The 37-residue stretch at 366–402 folds into the EGF-like 7; calcium-binding domain; that stretch reads NIDECASAPCQNGGVCIDGVNGYMCDCQPGYTGTHCE. The EGF-like 8; calcium-binding domain maps to 404-440; it reads DIDECARPPCQNGGDCVDGVNGYVCICAPGFDGLNCE. The EGF-like 9; calcium-binding domain occupies 442 to 478; that stretch reads NIDECASRPCQNGAVCVDGVNGFVCTCSAGYTGVLCE. Positions 480 to 516 constitute an EGF-like 10; calcium-binding domain; the sequence is DINECASMPCLNGGVCTDLVNGYICTCAAGFEGTNCE. The EGF-like 11; calcium-binding domain maps to 518 to 554; that stretch reads DTDECASFPCQNGATCTDQVNGYVCTCVPGYTGVLCE. The EGF-like 12; calcium-binding domain maps to 556-592; the sequence is DINECASFPCLNGGTCNDQVNGYVCVCAQDTSVSTCE. Residues 594 to 630 enclose the EGF-like 13; calcium-binding domain; that stretch reads DRDECASAPCLNGGACMDVVNGFVCTCLPGWEGTNCE. An EGF-like 14; calcium-binding domain is found at 632–668; the sequence is NTDECASSPCMNGGLCVDQVNSYVCFCLPGFTGIHCG. One can recognise an EGF-like 15; calcium-binding domain in the interval 670–706; that stretch reads EIDECASSPCLNGGQCIDRVDSYECVCAAGYTAVRCQ. An EGF-like 16; calcium-binding domain is found at 708–744; it reads NIDECASAPCQNGGVCVDGVNGYVCNCAPGYTGDNCE. The EGF-like 17; calcium-binding domain occupies 746 to 782; that stretch reads EIDECASMPCLNGGACIEMVNGYTCQCVAGYTGVICE. The EGF-like 18; calcium-binding domain occupies 784–820; the sequence is DIDECASAPCQNGGVCTDTINGYICACVPGFTGSNCE. The 37-residue stretch at 822-858 folds into the EGF-like 19; calcium-binding domain; that stretch reads NIDECASDPCLNGGICVDGVNGFVCQCPPNYSGTYCE. N-linked (GlcNAc...) asparagine glycosylation occurs at Asn-851. In terms of domain architecture, EGF-like 20 spans 860 to 896; it reads SLDACRSMPCQNGATCVNVGADYVCECVPGYAGQNCE. Residues 898-934 form the EGF-like 21; calcium-binding domain; it reads DINECASLPCQNGGLCIDGIAGYTCQCRLGYIGVNCE. The Avidin-like domain occupies 937–1056; that stretch reads GFCDLEGMWY…GQDKWTRYEQ (120 aa).

In terms of assembly, homotetramer.

Its subcellular location is the secreted. It localises to the extracellular space. It is found in the cytoplasmic vesicle. The protein resides in the extracellular matrix. The protein localises to the hyaline layer. Its subcellular location is the apical lamina. In terms of biological role, forms the apical lamina, a component of the extracellular matrix. The chain is Fibropellin-1 (EGF1) from Strongylocentrotus purpuratus (Purple sea urchin).